We begin with the raw amino-acid sequence, 299 residues long: Ribosomal protein L11 methyltransferase (299 aa).

S-adenosyl-L-methionine is bound by residues threonine 139, glycine 163, aspartate 185, and asparagine 232.

This sequence belongs to the methyltransferase superfamily. PrmA family.

Its subcellular location is the cytoplasm. It carries out the reaction L-lysyl-[protein] + 3 S-adenosyl-L-methionine = N(6),N(6),N(6)-trimethyl-L-lysyl-[protein] + 3 S-adenosyl-L-homocysteine + 3 H(+). In terms of biological role, methylates ribosomal protein L11. In Crocosphaera subtropica (strain ATCC 51142 / BH68) (Cyanothece sp. (strain ATCC 51142)), this protein is Ribosomal protein L11 methyltransferase.